The following is a 607-amino-acid chain: Chaperone protein DnaK (607 aa).

At Thr174 the chain carries Phosphothreonine; by autocatalysis. The span at 579–592 (AQAQAQQQAGANAG) shows a compositional bias: low complexity. The segment at 579 to 607 (AQAQAQQQAGANAGSDKKDEDVAEAEVVD) is disordered.

This sequence belongs to the heat shock protein 70 family.

Acts as a chaperone. The chain is Chaperone protein DnaK from Fusobacterium nucleatum subsp. nucleatum (strain ATCC 25586 / DSM 15643 / BCRC 10681 / CIP 101130 / JCM 8532 / KCTC 2640 / LMG 13131 / VPI 4355).